We begin with the raw amino-acid sequence, 313 residues long: Solute carrier family 35 member E3 (313 aa).

Transmembrane regions (helical) follow at residues Ile14–Trp34, Gly40–Ile60, Ile77–Ser97, Ile100–Tyr122, Ile130–Tyr146, Leu153–Val173, Leu187–Glu207, Ile215–Phe235, Thr252–Phe272, and Pro275–Thr295.

It belongs to the TPT transporter family. SLC35E subfamily.

The protein resides in the membrane. Its function is as follows. Putative transporter. The chain is Solute carrier family 35 member E3 (slc35e3) from Danio rerio (Zebrafish).